We begin with the raw amino-acid sequence, 183 residues long: Large ribosomal subunit protein uL6 (183 aa).

The protein belongs to the universal ribosomal protein uL6 family. In terms of assembly, part of the 50S ribosomal subunit.

In terms of biological role, this protein binds to the 23S rRNA, and is important in its secondary structure. It is located near the subunit interface in the base of the L7/L12 stalk, and near the tRNA binding site of the peptidyltransferase center. This is Large ribosomal subunit protein uL6 from Porphyromonas gingivalis (strain ATCC 33277 / DSM 20709 / CIP 103683 / JCM 12257 / NCTC 11834 / 2561).